The sequence spans 874 residues: Alanine--tRNA ligase (874 aa).

Residues H564, H568, C665, and H669 each contribute to the Zn(2+) site.

Belongs to the class-II aminoacyl-tRNA synthetase family. It depends on Zn(2+) as a cofactor.

It localises to the cytoplasm. It catalyses the reaction tRNA(Ala) + L-alanine + ATP = L-alanyl-tRNA(Ala) + AMP + diphosphate. Functionally, catalyzes the attachment of alanine to tRNA(Ala) in a two-step reaction: alanine is first activated by ATP to form Ala-AMP and then transferred to the acceptor end of tRNA(Ala). Also edits incorrectly charged Ser-tRNA(Ala) and Gly-tRNA(Ala) via its editing domain. The chain is Alanine--tRNA ligase from Polaromonas naphthalenivorans (strain CJ2).